We begin with the raw amino-acid sequence, 135 residues long: Large ribosomal subunit protein uL16c (135 aa).

Belongs to the universal ribosomal protein uL16 family. As to quaternary structure, part of the 50S ribosomal subunit.

The protein resides in the plastid. Its subcellular location is the chloroplast. The polypeptide is Large ribosomal subunit protein uL16c (Piper cenocladum (Ant piper)).